A 155-amino-acid chain; its full sequence is Cardioactive peptide (155 aa).

Residues 1-23 form the signal peptide; that stretch reads MRTSMRISLRLLALLACAICSQA. The propeptide occupies 24 to 49; that stretch reads SLERENNEGTNMANHKLSGVIQWKYE. C54 and C60 are joined by a disulfide. Residue C60 is modified to Cysteine amide. Positions 64–155 are excised as a propeptide; that stretch reads RTYPSYPPFS…MQQLEERESK (92 aa). The interval 135–155 is disordered; the sequence is NKQKMLQNEKEMQQLEERESK. A compositionally biased stretch (basic and acidic residues) spans 141-155; it reads QNEKEMQQLEERESK.

Central nervous system; most neurons exhibit coexpression with Burs.

It localises to the secreted. In terms of biological role, cardioregulatory neurohormone that increases heart beat rate during adult wing inflation; has no effect on beat amplitude. The effect of CCAP is both ino- and chronotropic. The chain is Cardioactive peptide from Drosophila melanogaster (Fruit fly).